A 316-amino-acid polypeptide reads, in one-letter code: Olfactory receptor 10H4 (316 aa).

The Extracellular segment spans residues 1–26 (MPSQNYSIISEFNLFGFSAFPQHLLP). An N-linked (GlcNAc...) asparagine glycan is attached at Asn5. A helical transmembrane segment spans residues 27–47 (ILFLLYLLMFLFTLLGNLLIM). Residues 48–55 (ATIWIEHR) are Cytoplasmic-facing. A helical membrane pass occupies residues 56-76 (LHTPMYLFLCTLSVSEILFTV). The Extracellular segment spans residues 77–100 (AITPRMLADLLSTHHSITFVACAN). Cys98 and Cys190 form a disulfide bridge. A helical transmembrane segment spans residues 101 to 121 (QMFFSFMFGFTHSFLLLVMGY). The Cytoplasmic portion of the chain corresponds to 122 to 140 (DRYVAICHPLRYNVLMSPR). Residues 141 to 161 (DCAHLVACTWAGGSVMGMMVT) form a helical membrane-spanning segment. Over 162 to 198 (TIVFHLTFCGSNVIHHFFCHVLSLLKLACENKTSSVI) the chain is Extracellular. Residues 199–219 (MGVMLVCVTALIGCLFLIILS) form a helical membrane-spanning segment. Over 220 to 239 (YVFIVAAILRIPSAEGRHKT) the chain is Cytoplasmic. A helical membrane pass occupies residues 240–260 (FSTCVSHLTVVVTHYSFASFI). At 261 to 273 (YLKPKGLHSMYSD) the chain is on the extracellular side. Residues 274–294 (ALMATTYTVFTPFLSPIIFSL) traverse the membrane as a helical segment. At 295–316 (RNKELKNAINKNFYRKFCPPSS) the chain is on the cytoplasmic side.

Belongs to the G-protein coupled receptor 1 family.

The protein resides in the cell membrane. In terms of biological role, odorant receptor. This Homo sapiens (Human) protein is Olfactory receptor 10H4 (OR10H4).